The following is a 343-amino-acid chain: Aspartate carbamoyltransferase catalytic subunit (343 aa).

Residues 1–14 show a composition bias toward polar residues; it reads MTTDTTGRTGNPAA. The interval 1–20 is disordered; that stretch reads MTTDTTGRTGNPAATASPDR. Positions 91 and 92 each coordinate carbamoyl phosphate. Residue Lys-119 coordinates L-aspartate. Carbamoyl phosphate contacts are provided by Arg-141, His-171, and Gln-174. Arg-204 and Arg-259 together coordinate L-aspartate. Positions 300 and 301 each coordinate carbamoyl phosphate.

The protein belongs to the aspartate/ornithine carbamoyltransferase superfamily. ATCase family. As to quaternary structure, heterododecamer (2C3:3R2) of six catalytic PyrB chains organized as two trimers (C3), and six regulatory PyrI chains organized as three dimers (R2).

The enzyme catalyses carbamoyl phosphate + L-aspartate = N-carbamoyl-L-aspartate + phosphate + H(+). The protein operates within pyrimidine metabolism; UMP biosynthesis via de novo pathway; (S)-dihydroorotate from bicarbonate: step 2/3. Functionally, catalyzes the condensation of carbamoyl phosphate and aspartate to form carbamoyl aspartate and inorganic phosphate, the committed step in the de novo pyrimidine nucleotide biosynthesis pathway. The polypeptide is Aspartate carbamoyltransferase catalytic subunit (Burkholderia lata (strain ATCC 17760 / DSM 23089 / LMG 22485 / NCIMB 9086 / R18194 / 383)).